Consider the following 298-residue polypeptide: Ribosomal protein L11 methyltransferase (298 aa).

S-adenosyl-L-methionine-binding residues include Thr-139, Gly-163, Asp-185, and Asn-232.

This sequence belongs to the methyltransferase superfamily. PrmA family.

It localises to the cytoplasm. It carries out the reaction L-lysyl-[protein] + 3 S-adenosyl-L-methionine = N(6),N(6),N(6)-trimethyl-L-lysyl-[protein] + 3 S-adenosyl-L-homocysteine + 3 H(+). In terms of biological role, methylates ribosomal protein L11. This chain is Ribosomal protein L11 methyltransferase, found in Gloeothece citriformis (strain PCC 7424) (Cyanothece sp. (strain PCC 7424)).